A 974-amino-acid polypeptide reads, in one-letter code: Bifunctional glutamine synthetase adenylyltransferase/adenylyl-removing enzyme (974 aa).

The adenylyl removase stretch occupies residues 1–464; sequence MKNAFLKTHL…HYAALFENEQ (464 aa). Positions 468–974 are adenylyl transferase; sequence LEIGNLVFTG…CSIFKQIMKH (507 aa).

The protein belongs to the GlnE family. The cofactor is Mg(2+).

The catalysed reaction is [glutamine synthetase]-O(4)-(5'-adenylyl)-L-tyrosine + phosphate = [glutamine synthetase]-L-tyrosine + ADP. The enzyme catalyses [glutamine synthetase]-L-tyrosine + ATP = [glutamine synthetase]-O(4)-(5'-adenylyl)-L-tyrosine + diphosphate. Involved in the regulation of glutamine synthetase GlnA, a key enzyme in the process to assimilate ammonia. When cellular nitrogen levels are high, the C-terminal adenylyl transferase (AT) inactivates GlnA by covalent transfer of an adenylyl group from ATP to specific tyrosine residue of GlnA, thus reducing its activity. Conversely, when nitrogen levels are low, the N-terminal adenylyl removase (AR) activates GlnA by removing the adenylyl group by phosphorolysis, increasing its activity. The regulatory region of GlnE binds the signal transduction protein PII (GlnB) which indicates the nitrogen status of the cell. This is Bifunctional glutamine synthetase adenylyltransferase/adenylyl-removing enzyme from Bartonella quintana (strain Toulouse) (Rochalimaea quintana).